The primary structure comprises 250 residues: MIIPAIDLIDGQVVRLYQGDYDKQTTFDLSPLAQLKSYQDQGAKLLHIVDLTGAKDPNQRQIKLISELVAGLDVDIQVGGGIRSEQQVTELLAIGVKRVVIGSLAVKEPELVKSWLNKYGSDAICLALDVNINANGEKIVAVSGWQSAGGKTLESLVAEFERPGSKQTALKHALVTDISRDGTLTGANTALYTELAAAYPTILWQASGGIATLDDVSAVKDSKAAGIIIGKALLINQFTVEEAIQCWPNA.

Aspartate 7 serves as the catalytic Proton acceptor. Aspartate 129 acts as the Proton donor in catalysis.

The protein belongs to the HisA/HisF family.

It is found in the cytoplasm. It catalyses the reaction 1-(5-phospho-beta-D-ribosyl)-5-[(5-phospho-beta-D-ribosylamino)methylideneamino]imidazole-4-carboxamide = 5-[(5-phospho-1-deoxy-D-ribulos-1-ylimino)methylamino]-1-(5-phospho-beta-D-ribosyl)imidazole-4-carboxamide. It functions in the pathway amino-acid biosynthesis; L-histidine biosynthesis; L-histidine from 5-phospho-alpha-D-ribose 1-diphosphate: step 4/9. The chain is 1-(5-phosphoribosyl)-5-[(5-phosphoribosylamino)methylideneamino] imidazole-4-carboxamide isomerase from Shewanella denitrificans (strain OS217 / ATCC BAA-1090 / DSM 15013).